The primary structure comprises 49 residues: Large ribosomal subunit protein eL40 (49 aa).

This sequence belongs to the eukaryotic ribosomal protein eL40 family.

The sequence is that of Large ribosomal subunit protein eL40 from Methanosarcina acetivorans (strain ATCC 35395 / DSM 2834 / JCM 12185 / C2A).